Consider the following 83-residue polypeptide: Transmembrane protein EP84R (83 aa).

2 helical membrane passes run Ile-31–Leu-51 and Ala-59–Tyr-79.

The protein belongs to the asfivirus EP84R family.

The protein localises to the virion membrane. The polypeptide is Transmembrane protein EP84R (Ornithodoros (relapsing fever ticks)).